The primary structure comprises 565 residues: Urease subunit beta (565 aa).

In terms of domain architecture, Urease spans 130 to 565; it reads GGIDTHIHFI…LALARKYFMI (436 aa). Ni(2+)-binding residues include His135, His137, and Lys218. N6-carboxylysine is present on Lys218. His220 is a binding site for substrate. His247 and His273 together coordinate Ni(2+). His321 (proton donor) is an active-site residue. Asp361 provides a ligand contact to Ni(2+).

The protein belongs to the metallo-dependent hydrolases superfamily. Urease alpha subunit family. Heterohexamer of 3 UreA (alpha) and 3 UreB (beta) subunits. Ni cation is required as a cofactor. Post-translationally, carboxylation allows a single lysine to coordinate two nickel ions.

Its subcellular location is the cytoplasm. It carries out the reaction urea + 2 H2O + H(+) = hydrogencarbonate + 2 NH4(+). The protein operates within nitrogen metabolism; urea degradation; CO(2) and NH(3) from urea (urease route): step 1/1. The protein is Urease subunit beta of Campylobacter lari.